The chain runs to 81 residues: Sulfur carrier protein TusA (81 aa).

The Cysteine persulfide intermediate role is filled by cysteine 19.

Belongs to the sulfur carrier protein TusA family.

It localises to the cytoplasm. Functionally, sulfur carrier protein which probably makes part of a sulfur-relay system. The protein is Sulfur carrier protein TusA of Shewanella sp. (strain ANA-3).